The primary structure comprises 159 residues: Immunogenic protein MPB63 (159 aa).

The first 29 residues, 1–29, serve as a signal peptide directing secretion; the sequence is MKLTTMIKTAVAVVAMAAIATFAAPVALA.

It is found in the secreted. The sequence is that of Immunogenic protein MPB63 (mpb63) from Mycobacterium bovis (strain ATCC BAA-935 / AF2122/97).